Consider the following 404-residue polypeptide: Cysteine desulfurase IscS (404 aa).

Residues 75–76 (AT), asparagine 155, glutamine 183, and 203–205 (SGH) contribute to the pyridoxal 5'-phosphate site. Lysine 206 carries the N6-(pyridoxal phosphate)lysine modification. Threonine 243 lines the pyridoxal 5'-phosphate pocket. Residue cysteine 328 is the Cysteine persulfide intermediate of the active site. Cysteine 328 is a [2Fe-2S] cluster binding site.

The protein belongs to the class-V pyridoxal-phosphate-dependent aminotransferase family. NifS/IscS subfamily. Homodimer. Forms a heterotetramer with IscU, interacts with other sulfur acceptors. It depends on pyridoxal 5'-phosphate as a cofactor.

Its subcellular location is the cytoplasm. The enzyme catalyses (sulfur carrier)-H + L-cysteine = (sulfur carrier)-SH + L-alanine. The protein operates within cofactor biosynthesis; iron-sulfur cluster biosynthesis. Master enzyme that delivers sulfur to a number of partners involved in Fe-S cluster assembly, tRNA modification or cofactor biosynthesis. Catalyzes the removal of elemental sulfur atoms from cysteine to produce alanine. Functions as a sulfur delivery protein for Fe-S cluster synthesis onto IscU, an Fe-S scaffold assembly protein, as well as other S acceptor proteins. This chain is Cysteine desulfurase IscS, found in Shewanella frigidimarina (strain NCIMB 400).